The sequence spans 275 residues: NH(3)-dependent NAD(+) synthetase (275 aa).

47–54 (GMSGGQDS) provides a ligand contact to ATP. Residue Asp-53 participates in Mg(2+) binding. Arg-141 serves as a coordination point for deamido-NAD(+). Thr-161 serves as a coordination point for ATP. Glu-166 contributes to the Mg(2+) binding site. The deamido-NAD(+) site is built by Lys-174 and Asp-181. Residues Lys-190 and Thr-212 each coordinate ATP. 261 to 262 (HK) is a deamido-NAD(+) binding site.

It belongs to the NAD synthetase family. In terms of assembly, homodimer.

The catalysed reaction is deamido-NAD(+) + NH4(+) + ATP = AMP + diphosphate + NAD(+) + H(+). It participates in cofactor biosynthesis; NAD(+) biosynthesis; NAD(+) from deamido-NAD(+) (ammonia route): step 1/1. Catalyzes the ATP-dependent amidation of deamido-NAD to form NAD. Uses ammonia as a nitrogen source. In Oceanobacillus iheyensis (strain DSM 14371 / CIP 107618 / JCM 11309 / KCTC 3954 / HTE831), this protein is NH(3)-dependent NAD(+) synthetase.